A 60-amino-acid chain; its full sequence is Ribosome modulation factor (60 aa).

The protein belongs to the ribosome modulation factor family.

The protein resides in the cytoplasm. In terms of biological role, during stationary phase, converts 70S ribosomes to an inactive dimeric form (100S ribosomes). The protein is Ribosome modulation factor of Kangiella koreensis (strain DSM 16069 / JCM 12317 / KCTC 12182 / SW-125).